The chain runs to 491 residues: Ketol-acid reductoisomerase (NADP(+)) (491 aa).

A KARI N-terminal Rossmann domain is found at 15–208 (AQLGKCRFMG…GGHRAGVLES (194 aa)). Residues 45–48 (CGAQ), R68, R76, S78, and 108–110 (DKQ) contribute to the NADP(+) site. The active site involves H132. G158 lines the NADP(+) pocket. 2 KARI C-terminal knotted domains span residues 209 to 344 (SFVA…TAPQ) and 345 to 484 (FEGK…MTDM). Mg(2+) contacts are provided by D217, E221, E389, and E393. Residue S414 participates in substrate binding.

It belongs to the ketol-acid reductoisomerase family. Mg(2+) is required as a cofactor.

The catalysed reaction is (2R)-2,3-dihydroxy-3-methylbutanoate + NADP(+) = (2S)-2-acetolactate + NADPH + H(+). It catalyses the reaction (2R,3R)-2,3-dihydroxy-3-methylpentanoate + NADP(+) = (S)-2-ethyl-2-hydroxy-3-oxobutanoate + NADPH + H(+). The protein operates within amino-acid biosynthesis; L-isoleucine biosynthesis; L-isoleucine from 2-oxobutanoate: step 2/4. Its pathway is amino-acid biosynthesis; L-valine biosynthesis; L-valine from pyruvate: step 2/4. Functionally, involved in the biosynthesis of branched-chain amino acids (BCAA). Catalyzes an alkyl-migration followed by a ketol-acid reduction of (S)-2-acetolactate (S2AL) to yield (R)-2,3-dihydroxy-isovalerate. In the isomerase reaction, S2AL is rearranged via a Mg-dependent methyl migration to produce 3-hydroxy-3-methyl-2-ketobutyrate (HMKB). In the reductase reaction, this 2-ketoacid undergoes a metal-dependent reduction by NADPH to yield (R)-2,3-dihydroxy-isovalerate. This chain is Ketol-acid reductoisomerase (NADP(+)), found in Salmonella heidelberg (strain SL476).